The primary structure comprises 407 residues: MAPRRRKAKRRRHTLRSECKDKCKCHVQCYVSPRKRRRKLKPQGDDDINTTHQQQAALTEEQRREEVEEEGEERERRGEEEREGEGGEEGEGREEAEEEEAEEKEAEEEEAEEAEEEAEEEEAEEAEAEEEEAEEEEAEEEEAEEAEEEEAEEAEEEAEEEEAEEEAEEEAEEAEEAEEEAEEEAEEAEEAEEAEEAEEEAEEAEEEAEEAEEEAEEAEEAEEAEEAEEEAEEAEEEEEEAGPSTPRLPHYKVVGQKPSTQPGGVPKLCLKMQPQHRSRLPKGKQSHDKVPKKYQARNKFFSQAAPSVLDLSPKSWCWVVDFWGPTDALYRLSRSLSFPGAVSSGIQTFPKGPHATGPWVYFITVYCRTFQTAKEVIKAQKKYEKKYPRSAKLKASLGKFSKSLPIE.

The disordered stretch occupies residues 34-268 (RKRRRKLKPQ…STQPGGVPKL (235 aa)). Residues 81 to 241 (EREGEGGEEG…EEAEEEEEEA (161 aa)) are compositionally biased toward acidic residues.

The protein belongs to the herpesviridae ICP22 family.

In Saimiriine herpesvirus 2 (strain 11) (SaHV-2), this protein is Transcriptional regulator ICP22 homolog (73).